Consider the following 694-residue polypeptide: Transcription activator of gluconeogenesis PTRG_06536 (694 aa).

A disordered region spans residues 1 to 57 (MTTPDAEDASPSPEYRSDQDDDMAAEQTTDRQSGDASPTQKPANGKPNAKDPLRPRR). Positions 64 to 92 (CFACQRAHLTCGDERPCGRCIKRGLQDHC) form a DNA-binding region, zn(2)-C6 fungal-type. Disordered regions lie at residues 175–216 (FSNQ…FGPL), 289–369 (AMAF…GDNP), 384–420 (AQRSPLVSRPQQENRPPTTALQSIHANGIRKRQRDTK), and 539–569 (VNLGTNRESSESDTSTQNTTPNLSAQDSEGA). Positions 193 to 204 (SVQNAGAPSTMS) are enriched in polar residues. Low complexity predominate over residues 205-214 (QGQQGMQQFG). A compositionally biased stretch (polar residues) spans 302–324 (WQETQSRQGSMHVHTPNNTSGSG). Over residues 349 to 363 (ATHSTASPASTDAST) the composition is skewed to low complexity. Residues 392–408 (RPQQENRPPTTALQSIH) show a composition bias toward polar residues. One can recognise a PAS domain in the interval 485 to 559 (LQRHLMTLQE…SDTSTQNTTP (75 aa)).

Belongs to the ERT1/acuK family.

The protein localises to the nucleus. Functionally, transcription factor which regulates nonfermentable carbon utilization. Activator of gluconeogenetic genes. This Pyrenophora tritici-repentis (strain Pt-1C-BFP) (Wheat tan spot fungus) protein is Transcription activator of gluconeogenesis PTRG_06536.